Here is a 220-residue protein sequence, read N- to C-terminus: Putative phosphatase YhcW (220 aa).

Asp-8 serves as the catalytic Nucleophile. Residues Asp-8, Asp-10, and Asp-166 each contribute to the a divalent metal cation site. Asp-10 functions as the Proton donor in the catalytic mechanism.

Belongs to the HAD-like hydrolase superfamily. CbbY/CbbZ/Gph/YieH family. The cofactor is a divalent metal cation.

This Bacillus subtilis (strain 168) protein is Putative phosphatase YhcW (yhcW).